The chain runs to 372 residues: Fatty acid 2-hydroxylase (372 aa).

The Cytochrome b5 heme-binding domain occupies Ala8 to Arg86. Heme contacts are provided by His43 and His69. Transmembrane regions (helical) follow at residues Val168–Tyr188 and Ser213–Ile233. In terms of domain architecture, Fatty acid hydroxylase spans Phe219–Thr361. Positions 234, 239, 257, 260, and 261 each coordinate Zn(2+). The next 2 helical transmembrane spans lie at Ser268–Met288 and Leu290–Leu310. Residues His315, His319, His336, His339, and His340 each coordinate Zn(2+).

This sequence belongs to the sterol desaturase family. SCS7 subfamily. The cofactor is Zn(2+). In terms of tissue distribution, detected in differentiating cultured keratinocytes (at protein level). Detected in epidermis and cultured keratinocytes. Highly expressed in brain and colon. Detected at lower levels in testis, prostate, pancreas and kidney.

The protein resides in the endoplasmic reticulum membrane. The protein localises to the microsome membrane. The catalysed reaction is a 1,2-saturated fatty acid + 2 Fe(II)-[cytochrome b5] + O2 + 2 H(+) = a (R)-2-hydroxy fatty acid + 2 Fe(III)-[cytochrome b5] + H2O. The enzyme catalyses hexadecanoate + 2 Fe(II)-[cytochrome b5] + O2 + 2 H(+) = (R)-2-hydroxyhexadecanoate + 2 Fe(III)-[cytochrome b5] + H2O. It catalyses the reaction octadecanoate + 2 Fe(II)-[cytochrome b5] + O2 + 2 H(+) = (R)-2-hydroxyoctadecanoate + 2 Fe(III)-[cytochrome b5] + H2O. It carries out the reaction docosanoate + 2 Fe(II)-[cytochrome b5] + O2 + 2 H(+) = 2-hydroxydocosanoate + 2 Fe(III)-[cytochrome b5] + H2O. The catalysed reaction is tetracosanoate + 2 Fe(II)-[cytochrome b5] + O2 + 2 H(+) = (R)-2-hydroxytetracosanoate + 2 Fe(III)-[cytochrome b5] + H2O. It functions in the pathway lipid metabolism; fatty acid metabolism. It participates in sphingolipid metabolism; galactosylceramide biosynthesis. Catalyzes the hydroxylation of free fatty acids at the C-2 position to produce 2-hydroxy fatty acids, which are building blocks of sphingolipids and glycosphingolipids common in neural tissue and epidermis. FA2H is stereospecific for the production of (R)-2-hydroxy fatty acids. Plays an essential role in the synthesis of galactosphingolipids of the myelin sheath. Responsible for the synthesis of sphingolipids and glycosphingolipids involved in the formation of epidermal lamellar bodies critical for skin permeability barrier. Participates in the synthesis of glycosphingolipids and a fraction of type II wax diesters in sebaceous gland, specifically regulating hair follicle homeostasis. Involved in the synthesis of sphingolipids of plasma membrane rafts, controlling lipid raft mobility and trafficking of raft-associated proteins. This is Fatty acid 2-hydroxylase from Homo sapiens (Human).